We begin with the raw amino-acid sequence, 689 residues long: Glycine--tRNA ligase beta subunit (689 aa).

This sequence belongs to the class-II aminoacyl-tRNA synthetase family. Tetramer of two alpha and two beta subunits.

It is found in the cytoplasm. It catalyses the reaction tRNA(Gly) + glycine + ATP = glycyl-tRNA(Gly) + AMP + diphosphate. The sequence is that of Glycine--tRNA ligase beta subunit from Escherichia coli O17:K52:H18 (strain UMN026 / ExPEC).